A 54-amino-acid polypeptide reads, in one-letter code: UPF0391 membrane protein Reut_A0124 (54 aa).

2 consecutive transmembrane segments (helical) span residues 5 to 25 (ALVF…GIAA) and 30 to 50 (IAKI…VMGL).

It belongs to the UPF0391 family.

It localises to the cell membrane. The protein is UPF0391 membrane protein Reut_A0124 of Cupriavidus pinatubonensis (strain JMP 134 / LMG 1197) (Cupriavidus necator (strain JMP 134)).